The chain runs to 614 residues: Probable NOT transcription complex subunit VIP2 (614 aa).

3 disordered regions span residues 1-46 (MSNL…NLQG), 58-89 (NMQG…SSGR), and 361-391 (NLGA…GLRP). The segment covering 364 to 381 (ATYSSHRPQQQPQHTSST) has biased composition (polar residues).

Belongs to the CNOT2/3/5 family. Interacts with Agrobacterium tumefaciens VirE2. Binds to VIP1. Forms a complex made of Agrobacterium VirE2, VIP1, VIP2 and single-stranded DNA (ssDNA).

The protein resides in the nucleus. Functionally, transcriptional regulator required for Agrobacterium-mediated stable genetic transformation by T-DNA integration in host genome, but not for T-DNA transient expression. The chain is Probable NOT transcription complex subunit VIP2 (VIP2) from Arabidopsis thaliana (Mouse-ear cress).